We begin with the raw amino-acid sequence, 469 residues long: Phosphatidylinositol 4-kinase type 2-alpha (469 aa).

Disordered regions lie at residues 1 to 30 and 50 to 72; these read MDET…ATVP and TATS…DQER. Residues 16-25 are compositionally biased toward polar residues; sequence EYSYQSQCSP. The span at 50–60 shows a compositional bias: low complexity; it reads TATSCGSAASG. In terms of domain architecture, PI3K/PI4K catalytic spans 115-443; the sequence is DILPERISQG…VQTPPVIVET (329 aa). Positions 121-127 are G-loop; that stretch reads ISQGSSG. Residues 122–128 and Lys143 contribute to the ATP site; that span reads SQGSSGS. An important for substrate binding region spans residues 148–150; sequence EPY. The important for interaction with membranes stretch occupies residues 156 to 169; the sequence is KWTKWLQKLCCPCC. S-palmitoyl cysteine attachment occurs at residues Cys165, Cys166, Cys168, and Cys169. An ATP-binding site is contributed by 252–255; sequence QIFV. The important for interaction with membranes stretch occupies residues 259–267; that stretch reads KDADYWLRR. The segment at 296–304 is catalytic loop; sequence RNTDRGNDN. The activation loop stretch occupies residues 334–354; sequence AIDNGLAFPLKHPDSWRAYPF. Residue Asp336 participates in ATP binding. The important for interaction with membranes stretch occupies residues 349–358; the sequence is WRAYPFYWAW.

The protein belongs to the PI3/PI4-kinase family. Type II PI4K subfamily.

It is found in the golgi apparatus. It localises to the trans-Golgi network membrane. Its subcellular location is the membrane raft. The protein resides in the endosome. The protein localises to the endosome membrane. It is found in the cytoplasmic vesicle. It localises to the cell projection. Its subcellular location is the dendrite. The protein resides in the presynaptic cell membrane. The protein localises to the synapse. It is found in the synaptosome. It localises to the mitochondrion. Its subcellular location is the membrane. The protein resides in the cell membrane. The protein localises to the perikaryon. It is found in the neuron projection. The catalysed reaction is a 1,2-diacyl-sn-glycero-3-phospho-(1D-myo-inositol) + ATP = a 1,2-diacyl-sn-glycero-3-phospho-(1D-myo-inositol 4-phosphate) + ADP + H(+). Functionally, membrane-bound phosphatidylinositol-4 kinase (PI4-kinase) that catalyzes the phosphorylation of phosphatidylinositol (PI) to phosphatidylinositol 4-phosphate (PI4P), a lipid that plays important roles in endocytosis, Golgi function, protein sorting and membrane trafficking. Besides, phosphorylation of phosphatidylinositol (PI) to phosphatidylinositol 4-phosphate (PI4P) is the first committed step in the generation of phosphatidylinositol 4,5-bisphosphate (PIP2), a precursor of the second messenger inositol 1,4,5-trisphosphate (InsP3). The protein is Phosphatidylinositol 4-kinase type 2-alpha (pi4k2a) of Xenopus laevis (African clawed frog).